Consider the following 428-residue polypeptide: Sporulation kinase C (428 aa).

The next 2 membrane-spanning stretches (helical) occupy residues 8–28 (IISI…FYFI) and 36–56 (PVDI…AYYI). Residues 76-147 (LSEEKNRIMD…NTQIQNKASS (72 aa)) form the PAS domain. The region spanning 148–200 (GMFTAKYVTKNGTIFWGEVHYKLYYDRDDQFTGSLGTMSDITERKEAEDELIE) is the PAC domain. Residues 221–426 (GIAHEVRNPL…VFQVVLPLKS (206 aa)) form the Histidine kinase domain. Phosphohistidine; by autocatalysis is present on histidine 224.

In terms of assembly, oligomerizes, probably forms homodimers; oligomerization is assisted by FloT. Interacts with FloT. Another study shows only rare colocalization with FloT or FloA membrane assemblies. KinC membrane assemblies are more mobile than FloT membrane assemblies.

Its subcellular location is the cell membrane. The protein localises to the membrane raft. The enzyme catalyses ATP + protein L-histidine = ADP + protein N-phospho-L-histidine.. Phosphorylates the sporulation-regulatory protein Spo0A a transcription factor that also controls biofilm formation. Requires FloT and FloA for localization to DRMs and for activity. The sequence is that of Sporulation kinase C from Bacillus subtilis (strain 168).